Consider the following 692-residue polypeptide: Peroxisomal primary amine oxidase (692 aa).

Low complexity predominate over residues 1–22; sequence MERLRQIASQATAASAAPARPA. The segment at 1 to 26 is disordered; sequence MERLRQIASQATAASAAPARPAHPLD. The N-linked (GlcNAc...) asparagine glycan is linked to Asn243. 317 to 328 contributes to the substrate binding site; that stretch reads ALDIGEYGAGYM. The active-site Proton acceptor is the Asp319. A disulfide bond links Cys338 and Cys364. Position 402–407 (402–407) interacts with substrate; the sequence is AANYEY. Residue Tyr405 is the Schiff-base intermediate with substrate; via topaquinone of the active site. Tyr405 bears the 2',4',5'-topaquinone mark. Positions 456 and 458 each coordinate Cu cation. 3 residues coordinate Mn(2+): Asp465, Asp613, and Ile614. His624 is a binding site for Cu cation.

It belongs to the copper/topaquinone oxidase family. As to quaternary structure, homodimer. Cu cation is required as a cofactor. It depends on Zn(2+) as a cofactor. L-topaquinone serves as cofactor. The cofactor is Mn(2+). In terms of processing, topaquinone (TPQ) is generated by copper-dependent autoxidation of a specific tyrosyl residue.

Its subcellular location is the peroxisome. It catalyses the reaction a primary methyl amine + O2 + H2O = an aldehyde + H2O2 + NH4(+). This chain is Peroxisomal primary amine oxidase (AMO), found in Pichia angusta (Yeast).